A 275-amino-acid chain; its full sequence is 4-hydroxy-tetrahydrodipicolinate reductase (275 aa).

NAD(+) is bound by residues 13 to 18 (GAAGKM) and 108 to 110 (GTT). The active-site Proton donor/acceptor is His-164. His-165 provides a ligand contact to (S)-2,3,4,5-tetrahydrodipicolinate. Lys-168 functions as the Proton donor in the catalytic mechanism. Residue 174–175 (GT) participates in (S)-2,3,4,5-tetrahydrodipicolinate binding.

This sequence belongs to the DapB family.

The protein resides in the cytoplasm. It carries out the reaction (S)-2,3,4,5-tetrahydrodipicolinate + NAD(+) + H2O = (2S,4S)-4-hydroxy-2,3,4,5-tetrahydrodipicolinate + NADH + H(+). It catalyses the reaction (S)-2,3,4,5-tetrahydrodipicolinate + NADP(+) + H2O = (2S,4S)-4-hydroxy-2,3,4,5-tetrahydrodipicolinate + NADPH + H(+). It functions in the pathway amino-acid biosynthesis; L-lysine biosynthesis via DAP pathway; (S)-tetrahydrodipicolinate from L-aspartate: step 4/4. Its function is as follows. Catalyzes the conversion of 4-hydroxy-tetrahydrodipicolinate (HTPA) to tetrahydrodipicolinate. This chain is 4-hydroxy-tetrahydrodipicolinate reductase, found in Cyanothece sp. (strain PCC 7425 / ATCC 29141).